The sequence spans 24 residues: Brevinin-1SY (24 aa).

Cys-18 and Cys-24 are oxidised to a cystine.

In terms of tissue distribution, expressed by the skin glands.

It is found in the secreted. Antibacterial activity against Gram-positive bacterium S.aureus and Gram-negative bacterium E.coli. This Lithobates sylvaticus (Wood frog) protein is Brevinin-1SY.